The primary structure comprises 30 residues: Kalata-B16 (30 aa).

Residues G1–D30 constitute a cross-link (cyclopeptide (Gly-Asp)). 3 cysteine pairs are disulfide-bonded: C4/C21, C8/C23, and C13/C28.

Post-translationally, this is a cyclic peptide.

Probably participates in a plant defense mechanism. The polypeptide is Kalata-B16 (Oldenlandia affinis).